The following is a 445-amino-acid chain: Cyclic GMP-AMP synthase-like receptor 1 (445 aa).

The Mg(2+) site is built by Glu70, Asp72, and Asp186. 70–72 is an ATP binding site; that stretch reads EYD. GTP is bound by residues Asp186 and 232 to 239; that span reads RTSFYEAE. ATP contacts are provided by residues 236–239, Lys257, and 270–274; these read YEAE and SYHIK. The disordered stretch occupies residues 357–445; it reads LNDDNENSVH…KSKTTTPKPS (89 aa). Positions 377-398 are enriched in basic and acidic residues; that stretch reads QKMEKTSTESEQKKPTETKPNA. Positions 435-445 are enriched in low complexity; the sequence is TKSKTTTPKPS.

The protein belongs to the mab-21 family. Mg(2+) is required as a cofactor. It depends on Mn(2+) as a cofactor.

It catalyses the reaction GTP + ATP = 3',2'-cGAMP + 2 diphosphate. The enzyme catalyses GTP + ATP = pppA(2'-5')pG + diphosphate. It carries out the reaction pppA(2'-5')pG = 3',2'-cGAMP + diphosphate. Its activity is regulated as follows. The enzyme activity is specifically activated by double-stranded RNA (dsRNA). Nucleotidyltransferase that catalyzes the formation of cyclic GMP-AMP (3',2'-cGAMP) from ATP and GTP and plays a key role in innate immunity. Synthesizes 3',2'-cGAMP in a two-step reaction through production of the linear intermediate pppA(2'-5')pG. Acts as a key sensor of double-stranded RNA (dsRNA), the presence of dsRNA in the cytoplasm being a danger signal that triggers the immune responses. Directly binds dsRNA, activating the nucleotidyltransferase activity, leading to synthesis of 3',2'-cGAMP, a second messenger that binds to and activates Sting, thereby triggering the antiviral immune response via activation of the NF-kappa-B transcription factor Rel (Relish). This Drosophila erecta (Fruit fly) protein is Cyclic GMP-AMP synthase-like receptor 1.